Reading from the N-terminus, the 593-residue chain is A-type ATP synthase subunit A (593 aa).

236–243 (GPFGSGKT) serves as a coordination point for ATP.

The protein belongs to the ATPase alpha/beta chains family. Has multiple subunits with at least A(3), B(3), C, D, E, F, H, I and proteolipid K(x).

The protein localises to the cell membrane. The catalysed reaction is ATP + H2O + 4 H(+)(in) = ADP + phosphate + 5 H(+)(out). Its function is as follows. Component of the A-type ATP synthase that produces ATP from ADP in the presence of a proton gradient across the membrane. The A chain is the catalytic subunit. The sequence is that of A-type ATP synthase subunit A from Pyrobaculum arsenaticum (strain DSM 13514 / JCM 11321 / PZ6).